Consider the following 435-residue polypeptide: AMSH-like protease sst2 (435 aa).

Low complexity predominate over residues 162-181; sequence TDLLSPDSQKLSKSSSDLPQ. The tract at residues 162 to 185 is disordered; that stretch reads TDLLSPDSQKLSKSSSDLPQFDYP. Position 192 is a phosphothreonine (threonine 192). An MPN domain is found at 262 to 392; it reads TIYLPKLLKK…FRLLDPEGLQ (131 aa). Zn(2+) contacts are provided by histidine 341, histidine 343, aspartate 354, histidine 356, cysteine 397, histidine 404, and histidine 406. The short motif at 341–354 is the JAMM motif element; it reads HTHPTQTCFMSSVD.

This sequence belongs to the peptidase M67C family. Zn(2+) is required as a cofactor.

Its subcellular location is the cytoplasm. It is found in the endosome. Zinc metalloprotease that specifically cleaves 'Lys-63'-linked polyubiquitin chains. Does not cleave 'Lys-48'-linked polyubiquitin chains. Plays a role in the multivesicular body (MVB) sorting pathway. Required for ubiquitin-dependent sorting of proteins into the endosome and subsequent trafficking to the vacuole. May regulate MVB sorting through deubiquitination of ubiquitinated ESCRT proteins. The chain is AMSH-like protease sst2 (sst2) from Schizosaccharomyces pombe (strain 972 / ATCC 24843) (Fission yeast).